The following is a 272-amino-acid chain: NAD kinase (272 aa).

Catalysis depends on Asp-62, which acts as the Proton acceptor. NAD(+) contacts are provided by residues 62–63, Arg-67, 129–130, Arg-140, Lys-157, Asp-159, 170–175, Ala-194, and Gln-229; these read DG, NE, and SSYSSS.

Belongs to the NAD kinase family. A divalent metal cation serves as cofactor.

It is found in the cytoplasm. It catalyses the reaction NAD(+) + ATP = ADP + NADP(+) + H(+). In terms of biological role, involved in the regulation of the intracellular balance of NAD and NADP, and is a key enzyme in the biosynthesis of NADP. Catalyzes specifically the phosphorylation on 2'-hydroxyl of the adenosine moiety of NAD to yield NADP. The protein is NAD kinase of Thermoplasma volcanium (strain ATCC 51530 / DSM 4299 / JCM 9571 / NBRC 15438 / GSS1).